The primary structure comprises 402 residues: Putative cytochrome P450 133B1 (402 aa).

Cys-348 contributes to the heme binding site.

Belongs to the cytochrome P450 family. It depends on heme as a cofactor.

This Xylella fastidiosa (strain 9a5c) protein is Putative cytochrome P450 133B1 (cyp133B1).